The chain runs to 1510 residues: Cysteine-tryptophan domain-containing zinc finger protein 5 (1510 aa).

A compositionally biased stretch (polar residues) spans 174 to 196 (YCQRTSSENDSNHSQQLLNSGPE). Disordered regions lie at residues 174-198 (YCQR…PEQK), 449-497 (SSLD…CAKD), 555-574 (KPNY…YVLD), and 582-616 (LHTE…DHKI). Residues 454–465 (GFSHKTKSDKCN) are compositionally biased toward basic and acidic residues. Polar residues predominate over residues 467–476 (QPVTTSSQLQ). 2 stretches are compositionally biased toward basic and acidic residues: residues 479–497 (PAKK…CAKD) and 556–574 (PNYD…YVLD). Residues 645–698 (SEPVDQWVCCDKCETWRLLPYGMNSDTLPKKWRCSMQSWLPGMNNCKLSEGETT) form a CW-type zinc finger. Positions 654, 657, 678, and 690 each coordinate Zn(2+). Residues 768–780 (KQKRIESSDKGEK) are compositionally biased toward basic and acidic residues. Disordered stretches follow at residues 768–893 (KQKR…RDLF), 1003–1050 (STAA…LDRH), and 1149–1194 (LPIH…VRPD). The segment covering 781-790 (STVTISSGQT) has biased composition (polar residues). Positions 874–893 (NSDRGARASDAGKSDPRDLF) are enriched in basic and acidic residues. Positions 1003-1016 (STAATSSSSKVSSS) are enriched in low complexity. Composition is skewed to polar residues over residues 1026–1040 (TRTS…SPLR) and 1162–1182 (PDQN…QAKL).

Highly expressed in young panicles. Expressed at low levels in leaf sheaths, nodes, internodes and axillary buds.

Its subcellular location is the nucleus. Functionally, binds to histones H3K4me1, H3K4me2 and H3K4me3 in GST pull-down assay. May facilitate the recruitment of effectors to mediate gene expression. In Oryza sativa subsp. japonica (Rice), this protein is Cysteine-tryptophan domain-containing zinc finger protein 5.